The following is a 366-amino-acid chain: Chorismate synthase (366 aa).

NADP(+) contacts are provided by arginine 48 and arginine 54. FMN is bound by residues 125–127 (RSS), 242–243 (NA), glycine 287, 302–306 (KPTSS), and arginine 328.

It belongs to the chorismate synthase family. Homotetramer. It depends on FMNH2 as a cofactor.

The catalysed reaction is 5-O-(1-carboxyvinyl)-3-phosphoshikimate = chorismate + phosphate. Its pathway is metabolic intermediate biosynthesis; chorismate biosynthesis; chorismate from D-erythrose 4-phosphate and phosphoenolpyruvate: step 7/7. Catalyzes the anti-1,4-elimination of the C-3 phosphate and the C-6 proR hydrogen from 5-enolpyruvylshikimate-3-phosphate (EPSP) to yield chorismate, which is the branch point compound that serves as the starting substrate for the three terminal pathways of aromatic amino acid biosynthesis. This reaction introduces a second double bond into the aromatic ring system. This chain is Chorismate synthase, found in Rhodospirillum rubrum (strain ATCC 11170 / ATH 1.1.1 / DSM 467 / LMG 4362 / NCIMB 8255 / S1).